The chain runs to 476 residues: Proline--tRNA ligase 2 (476 aa).

It belongs to the class-II aminoacyl-tRNA synthetase family. ProS type 3 subfamily. As to quaternary structure, homodimer.

Its subcellular location is the cytoplasm. It carries out the reaction tRNA(Pro) + L-proline + ATP = L-prolyl-tRNA(Pro) + AMP + diphosphate. Catalyzes the attachment of proline to tRNA(Pro) in a two-step reaction: proline is first activated by ATP to form Pro-AMP and then transferred to the acceptor end of tRNA(Pro). The sequence is that of Proline--tRNA ligase 2 from Bacillus thuringiensis subsp. konkukian (strain 97-27).